The sequence spans 283 residues: Pantothenate synthetase (283 aa).

Residue 30–37 (MGNLHAGH) coordinates ATP. The active-site Proton donor is the histidine 37. A (R)-pantoate-binding site is contributed by glutamine 61. Glutamine 61 contacts beta-alanine. 149–152 (GEKD) lines the ATP pocket. (R)-pantoate is bound at residue glutamine 155. ATP-binding positions include valine 178 and 186 to 189 (LSSR).

The protein belongs to the pantothenate synthetase family. In terms of assembly, homodimer.

It is found in the cytoplasm. The catalysed reaction is (R)-pantoate + beta-alanine + ATP = (R)-pantothenate + AMP + diphosphate + H(+). The protein operates within cofactor biosynthesis; (R)-pantothenate biosynthesis; (R)-pantothenate from (R)-pantoate and beta-alanine: step 1/1. In terms of biological role, catalyzes the condensation of pantoate with beta-alanine in an ATP-dependent reaction via a pantoyl-adenylate intermediate. This is Pantothenate synthetase from Pseudomonas paraeruginosa (strain DSM 24068 / PA7) (Pseudomonas aeruginosa (strain PA7)).